Here is a 192-residue protein sequence, read N- to C-terminus: UPF0312 protein YE1254 (192 aa).

A signal peptide spans M1 to A23.

It belongs to the UPF0312 family. Type 1 subfamily.

Its subcellular location is the periplasm. This Yersinia enterocolitica serotype O:8 / biotype 1B (strain NCTC 13174 / 8081) protein is UPF0312 protein YE1254.